A 311-amino-acid polypeptide reads, in one-letter code: Ribosomal protein L11 methyltransferase (311 aa).

Positions 162, 183, 205, and 248 each coordinate S-adenosyl-L-methionine.

The protein belongs to the methyltransferase superfamily. PrmA family.

The protein localises to the cytoplasm. It catalyses the reaction L-lysyl-[protein] + 3 S-adenosyl-L-methionine = N(6),N(6),N(6)-trimethyl-L-lysyl-[protein] + 3 S-adenosyl-L-homocysteine + 3 H(+). Methylates ribosomal protein L11. The polypeptide is Ribosomal protein L11 methyltransferase (Bacillus pumilus (strain SAFR-032)).